The primary structure comprises 394 residues: 8-amino-7-oxononanoate synthase (394 aa).

Substrate is bound at residue Arg-21. Pyridoxal 5'-phosphate is bound at residue 112-113; it reads GY. Residue His-137 coordinates substrate. Pyridoxal 5'-phosphate-binding residues include Ser-183, His-211, and Thr-239. An N6-(pyridoxal phosphate)lysine modification is found at Lys-242. Position 358 (Thr-358) interacts with substrate.

Belongs to the class-II pyridoxal-phosphate-dependent aminotransferase family. BioF subfamily. As to quaternary structure, homodimer. Requires pyridoxal 5'-phosphate as cofactor.

It carries out the reaction 6-carboxyhexanoyl-[ACP] + L-alanine + H(+) = (8S)-8-amino-7-oxononanoate + holo-[ACP] + CO2. The protein operates within cofactor biosynthesis; biotin biosynthesis. Functionally, catalyzes the decarboxylative condensation of pimeloyl-[acyl-carrier protein] and L-alanine to produce 8-amino-7-oxononanoate (AON), [acyl-carrier protein], and carbon dioxide. In Burkholderia cenocepacia (strain ATCC BAA-245 / DSM 16553 / LMG 16656 / NCTC 13227 / J2315 / CF5610) (Burkholderia cepacia (strain J2315)), this protein is 8-amino-7-oxononanoate synthase.